A 167-amino-acid polypeptide reads, in one-letter code: Large ribosomal subunit protein bL9 (167 aa).

It belongs to the bacterial ribosomal protein bL9 family.

Its function is as follows. Binds to the 23S rRNA. This Chlamydia trachomatis serovar L2 (strain ATCC VR-902B / DSM 19102 / 434/Bu) protein is Large ribosomal subunit protein bL9.